We begin with the raw amino-acid sequence, 896 residues long: MTQLTVKALSEEIGTPVDRLIEQLADAGMKKAGSDQVTDSEKQTLLTHLKKEHGDTSGETEPTRLTLQRKTRSTLSVAAGGGKSKDVQVEVRKKRTYVKRSTIEDEAKREAEEVANREAEEKAQRDAEEQAKRDAAEKAQREAEAKVTREADAKREAEEKAQRAQAEKAKKDMNSKNADANAQAKKEADELKARQEQEATRKAEAEAAKLVEEARKLAEENQERWSEEEKKKKEQEKSADYHVTTSTYAREAEDAADKKDEKAPRRRKKKPAPATQPGNNRGGRNQRGRGGKGKLAKPTSMQQGFDKSATVAKSDVAIGETIVVSELASKMSVKATEVIKVMMKMGAMATINQVIDQETAQLVAEEMGHKVILRKENELEEAVLADRDSDAIAEGRAPVVTIMGHVDHGKTSTLDYIRKAHVASGEAGGITQHIGAYHVDTDNGMITFLDTPGHAAFTAMRARGAQATDIVVLVVAADDGVMPQTIEAIQHAKAAGVPLIVAVNKIDKEGANPDNVKNELAQYDVIPEEWGGENIFVHISAKQGTNIDGLLESILLQSEVLELTAVKEGMASGVVVESRLDKGRGPVATVLVQSGTLNKGDIVLCGQEYGRVRAMRDENGKDIETAGPSIPVEILGLSGVPASGDEATVVRDERKAREVANYRQGKFRDVKLARQQKAKLENMFANMTAGEVAELNVVLKADVQGSVEAIADSLLKLSTDEVKVNIVGSGVGGITETDATLAAASNAIILGFNVRADATARNTVQNENLDLRYYSIIYQLIDEVKQAMGGMLAPEFRQEIIGLAQVRDVFKSPKLGAIAGCIVTEGTIKRSNPIRVLRENVVIYEGELESLRRFKDDVQEVKNGYECGVGVKNYNDVRVGDQIEVFEIVEVKRTLD.

Positions 49 to 310 (LKKEHGDTSG…MQQGFDKSAT (262 aa)) are disordered. Over residues 57–66 (SGETEPTRLT) the composition is skewed to polar residues. 3 stretches are compositionally biased toward basic and acidic residues: residues 101–174 (STIE…KDMN), 184–240 (AKKE…KSAD), and 250–263 (REAEDAADKKDEKA). Positions 284–295 (RNQRGRGGKGKL) are enriched in basic residues. The region spanning 395–564 (GRAPVVTIMG…LLQSEVLELT (170 aa)) is the tr-type G domain. The interval 404–411 (GHVDHGKT) is G1. GTP is bound at residue 404 to 411 (GHVDHGKT). A G2 region spans residues 429–433 (GITQH). The G3 stretch occupies residues 450 to 453 (DTPG). GTP is bound by residues 450-454 (DTPGH) and 504-507 (NKID). The G4 stretch occupies residues 504 to 507 (NKID). The interval 540 to 542 (SAK) is G5.

Belongs to the TRAFAC class translation factor GTPase superfamily. Classic translation factor GTPase family. IF-2 subfamily.

The protein resides in the cytoplasm. Its function is as follows. One of the essential components for the initiation of protein synthesis. Protects formylmethionyl-tRNA from spontaneous hydrolysis and promotes its binding to the 30S ribosomal subunits. Also involved in the hydrolysis of GTP during the formation of the 70S ribosomal complex. The protein is Translation initiation factor IF-2 of Vibrio atlanticus (strain LGP32) (Vibrio splendidus (strain Mel32)).